Consider the following 271-residue polypeptide: MLLTVDVRNTNIVLGLFSGTGEYSKLLQDWRMRTDPRMTADELALTFRGLLGTHVDEITGVAALSTVPSVLREIRVMLERYWGHVPHVVVEPGIRTGVPLLVDNPKEVGADRIVNSLAAHHLYEGPCIVVDFGTSTCVDVVSAKGEFLGGCIAPGLEISTDALASQSAALRKVELVRPRSVVGKNTVECMQSGAVFGFAGLVDGLVNRVRDELPEFGGDDVSVIATGDSAPLIIPESDTIDHLERDLTLEGLRLVFERNQARRGSGRRPVA.

6–13 contributes to the ATP binding site; the sequence is DVRNTNIV. A substrate-binding site is contributed by 109 to 112; sequence GADR. Catalysis depends on Asp-111, which acts as the Proton acceptor. Asp-131 serves as a coordination point for K(+). Position 134 (Thr-134) interacts with ATP. Thr-186 is a substrate binding site.

The protein belongs to the type III pantothenate kinase family. Homodimer. Requires NH4(+) as cofactor. The cofactor is K(+).

Its subcellular location is the cytoplasm. It catalyses the reaction (R)-pantothenate + ATP = (R)-4'-phosphopantothenate + ADP + H(+). It participates in cofactor biosynthesis; coenzyme A biosynthesis; CoA from (R)-pantothenate: step 1/5. Catalyzes the phosphorylation of pantothenate (Pan), the first step in CoA biosynthesis. In Rhodococcus erythropolis (strain PR4 / NBRC 100887), this protein is Type III pantothenate kinase.